The sequence spans 208 residues: Thiamine-phosphate synthase (208 aa).

Residues 37–39 and asparagine 70 contribute to the 4-amino-2-methyl-5-(diphosphooxymethyl)pyrimidine site; that span reads QVR. Positions 71 and 90 each coordinate Mg(2+). 4-amino-2-methyl-5-(diphosphooxymethyl)pyrimidine is bound at residue threonine 109. 135 to 137 is a 2-[(2R,5Z)-2-carboxy-4-methylthiazol-5(2H)-ylidene]ethyl phosphate binding site; that stretch reads TTS. Position 138 (lysine 138) interacts with 4-amino-2-methyl-5-(diphosphooxymethyl)pyrimidine. Residue alanine 166 coordinates 2-[(2R,5Z)-2-carboxy-4-methylthiazol-5(2H)-ylidene]ethyl phosphate.

It belongs to the thiamine-phosphate synthase family. Mg(2+) is required as a cofactor.

The catalysed reaction is 2-[(2R,5Z)-2-carboxy-4-methylthiazol-5(2H)-ylidene]ethyl phosphate + 4-amino-2-methyl-5-(diphosphooxymethyl)pyrimidine + 2 H(+) = thiamine phosphate + CO2 + diphosphate. It catalyses the reaction 2-(2-carboxy-4-methylthiazol-5-yl)ethyl phosphate + 4-amino-2-methyl-5-(diphosphooxymethyl)pyrimidine + 2 H(+) = thiamine phosphate + CO2 + diphosphate. It carries out the reaction 4-methyl-5-(2-phosphooxyethyl)-thiazole + 4-amino-2-methyl-5-(diphosphooxymethyl)pyrimidine + H(+) = thiamine phosphate + diphosphate. Its pathway is cofactor biosynthesis; thiamine diphosphate biosynthesis; thiamine phosphate from 4-amino-2-methyl-5-diphosphomethylpyrimidine and 4-methyl-5-(2-phosphoethyl)-thiazole: step 1/1. Condenses 4-methyl-5-(beta-hydroxyethyl)thiazole monophosphate (THZ-P) and 2-methyl-4-amino-5-hydroxymethyl pyrimidine pyrophosphate (HMP-PP) to form thiamine monophosphate (TMP). This chain is Thiamine-phosphate synthase, found in Salinispora tropica (strain ATCC BAA-916 / DSM 44818 / JCM 13857 / NBRC 105044 / CNB-440).